Consider the following 139-residue polypeptide: Ribulose bisphosphate carboxylase small subunit (139 aa).

The protein belongs to the RuBisCO small chain family. In terms of assembly, heterohexadecamer of 8 large and 8 small subunits.

The protein resides in the plastid. It localises to the chloroplast. RuBisCO catalyzes two reactions: the carboxylation of D-ribulose 1,5-bisphosphate, the primary event in carbon dioxide fixation, as well as the oxidative fragmentation of the pentose substrate in the photorespiration process. Both reactions occur simultaneously and in competition at the same active site. Although the small subunit is not catalytic it is essential for maximal activity. The polypeptide is Ribulose bisphosphate carboxylase small subunit (Cylindrotheca sp. (strain N1) (Marine diatom)).